The primary structure comprises 556 residues: mRNA-capping enzyme subunit beta (556 aa).

Disordered regions lie at residues 1-28 (MKPS…DNNV) and 56-217 (LPPV…QKTS). The segment covering 63-74 (VSTSDTGNTSHT) has biased composition (polar residues). The segment covering 85-96 (ESDETDTDDEPG) has biased composition (acidic residues). Basic and acidic residues-rich tracts occupy residues 103 to 131 (TKFR…KDKQ) and 139 to 212 (IQLD…KDIF).

It belongs to the fungal TPase family. Heterodimer. The mRNA-capping enzyme is composed of two separate chains alpha and beta, respectively a mRNA guanylyltransferase and an mRNA 5'-triphosphate monophosphatase. It depends on Mg(2+) as a cofactor.

The protein resides in the nucleus. The enzyme catalyses a 5'-end triphospho-ribonucleoside in mRNA + H2O = a 5'-end diphospho-ribonucleoside in mRNA + phosphate + H(+). First step of mRNA capping. Converts the 5'-triphosphate end of a nascent mRNA chain into a diphosphate end. This Kluyveromyces lactis (strain ATCC 8585 / CBS 2359 / DSM 70799 / NBRC 1267 / NRRL Y-1140 / WM37) (Yeast) protein is mRNA-capping enzyme subunit beta (CET1).